A 648-amino-acid polypeptide reads, in one-letter code: Dystrotelin (648 aa).

A ZZ-type zinc finger spans residues 223–279; it reads QHRVHCHACKAFPITGLRYRCLKCLNVHLCQSCFLTERRSRKHKPSHSVLEYCTQPS. Positions 228, 231, 243, 246, 252, 255, 265, and 269 each coordinate Zn(2+). Residues 367–446 adopt a coiled-coil conformation; sequence QRETAELQKD…LDTVRHLLSL (80 aa). The segment covering 455 to 474 has biased composition (polar residues); that stretch reads SHSNLQLEQDGSINENNWTQ. Disordered regions lie at residues 455 to 509 and 536 to 557; these read SHSN…DTLY and QREEEELQEEEEGLHEKEEGLP. Residues 479-502 show a composition bias toward basic and acidic residues; the sequence is KPHESSSTEHEVEERGTRQERRFE. The segment covering 538–548 has biased composition (acidic residues); the sequence is EEEELQEEEEG.

It localises to the cell membrane. In Danio rerio (Zebrafish), this protein is Dystrotelin (dytn).